Consider the following 514-residue polypeptide: Cholesterol side-chain cleavage enzyme, mitochondrial (514 aa).

The transit peptide at 1-39 directs the protein to the mitochondrion; that stretch reads MMVSWSVCRSSLALPACGLPSARHNSSMPVVRQALSPDN. Cys-458 lines the heme pocket.

The protein belongs to the cytochrome P450 family. Heme is required as a cofactor. As to expression, in the ovary, not found in early vitellogenic follicles, barely detected in postvitellogenic follicles and abundant in post-ovulatory follicles.

The protein localises to the mitochondrion inner membrane. The enzyme catalyses 6 reduced [adrenodoxin] + cholesterol + 3 O2 + 6 H(+) = 4-methylpentanal + pregnenolone + 6 oxidized [adrenodoxin] + 4 H2O. Its pathway is lipid metabolism; C21-steroid hormone metabolism. Catalyzes the side-chain cleavage reaction of cholesterol to pregnenolone, the precursor of most steroid hormones. The chain is Cholesterol side-chain cleavage enzyme, mitochondrial (cyp11a1) from Oncorhynchus mykiss (Rainbow trout).